Consider the following 194-residue polypeptide: MSAITITEAAHDYLADLLAKQNTTGIGIRIFITQPGTPYAETCIAYCKPGEEKPDDIALALKSFTAWIDGTSEPFLEDALVDYATDRMGGQLTIKAPNAKVPMVNEDSPMNERINYYLQTEINPGLASHGGQVTLIDVVEEGIAVLQFGGGCQGCGQADVTLKEGIEKTLLARIPELKGVRDVTDHTNRENAYY.

The [4Fe-4S] cluster site is built by Cys-152 and Cys-155.

Belongs to the NfuA family. As to quaternary structure, homodimer. It depends on [4Fe-4S] cluster as a cofactor.

Functionally, involved in iron-sulfur cluster biogenesis. Binds a 4Fe-4S cluster, can transfer this cluster to apoproteins, and thereby intervenes in the maturation of Fe/S proteins. Could also act as a scaffold/chaperone for damaged Fe/S proteins. This is Fe/S biogenesis protein NfuA from Stutzerimonas stutzeri (strain A1501) (Pseudomonas stutzeri).